A 436-amino-acid chain; its full sequence is Methanethiol oxidase (436 aa).

Positions 1-24 are cleaved as a signal peptide; the sequence is MKRREFGALAAGALAMGLPFRAFA.

The protein belongs to the selenium-binding protein family.

The protein localises to the periplasm. It carries out the reaction methanethiol + O2 + H2O = hydrogen sulfide + formaldehyde + H2O2 + H(+). The protein operates within organosulfur degradation. Its function is as follows. Catalyzes the oxidation of methanethiol. This chain is Methanethiol oxidase, found in Ruegeria pomeroyi (strain ATCC 700808 / DSM 15171 / DSS-3) (Silicibacter pomeroyi).